Consider the following 254-residue polypeptide: 3-deoxy-manno-octulosonate cytidylyltransferase (254 aa).

The protein belongs to the KdsB family.

It is found in the cytoplasm. The catalysed reaction is 3-deoxy-alpha-D-manno-oct-2-ulosonate + CTP = CMP-3-deoxy-beta-D-manno-octulosonate + diphosphate. It participates in nucleotide-sugar biosynthesis; CMP-3-deoxy-D-manno-octulosonate biosynthesis; CMP-3-deoxy-D-manno-octulosonate from 3-deoxy-D-manno-octulosonate and CTP: step 1/1. The protein operates within bacterial outer membrane biogenesis; lipopolysaccharide biosynthesis. In terms of biological role, activates KDO (a required 8-carbon sugar) for incorporation into bacterial lipopolysaccharide in Gram-negative bacteria. The sequence is that of 3-deoxy-manno-octulosonate cytidylyltransferase from Pseudomonas syringae pv. tomato (strain ATCC BAA-871 / DC3000).